Reading from the N-terminus, the 438-residue chain is 3-phosphoshikimate 1-carboxyvinyltransferase (438 aa).

Lysine 26, serine 27, and arginine 31 together coordinate 3-phosphoshikimate. Phosphoenolpyruvate is bound at residue lysine 26. Phosphoenolpyruvate contacts are provided by glycine 99 and arginine 127. 3-phosphoshikimate is bound by residues serine 172, glutamine 174, aspartate 320, and lysine 347. A phosphoenolpyruvate-binding site is contributed by glutamine 174. Aspartate 320 functions as the Proton acceptor in the catalytic mechanism. Phosphoenolpyruvate contacts are provided by arginine 351 and arginine 392.

It belongs to the EPSP synthase family. As to quaternary structure, monomer.

The protein localises to the cytoplasm. The catalysed reaction is 3-phosphoshikimate + phosphoenolpyruvate = 5-O-(1-carboxyvinyl)-3-phosphoshikimate + phosphate. Its pathway is metabolic intermediate biosynthesis; chorismate biosynthesis; chorismate from D-erythrose 4-phosphate and phosphoenolpyruvate: step 6/7. Functionally, catalyzes the transfer of the enolpyruvyl moiety of phosphoenolpyruvate (PEP) to the 5-hydroxyl of shikimate-3-phosphate (S3P) to produce enolpyruvyl shikimate-3-phosphate and inorganic phosphate. This Xanthomonas campestris pv. campestris (strain 8004) protein is 3-phosphoshikimate 1-carboxyvinyltransferase.